We begin with the raw amino-acid sequence, 276 residues long: MNPEHSPLGKATVYAAQYDASLLFPIPRAGAREQLGITSALPFFGTDIWNAYELSWLNARGKPQVAIATFYVPAESPNIVESKSFKLYLGSFAQSKFDSVDAVRDVLKRDVSAACGASVSVQLVSPHDFAKLEMDELDGLSLDRLDLDTDVYEPDPSLLSAADGENEAPVEETLVSDLLRSNCPVTGQPDWGSVQIHYVGPQIDHAGLLRYIISFRNHTGFHEQCVERIFLDILHACKPVKLAVYARYTRRGGLDINPFRTNYNQPMPDNARTARQ.

80 to 82 (VES) provides a ligand contact to substrate. 82–83 (SK) is a binding site for NADPH. Cys-183 serves as the catalytic Thioimide intermediate. Residue Asp-190 is the Proton donor of the active site. Position 222–223 (222–223 (HE)) interacts with substrate. 251-252 (RG) contacts NADPH.

This sequence belongs to the GTP cyclohydrolase I family. QueF type 2 subfamily. As to quaternary structure, homodimer.

It localises to the cytoplasm. It catalyses the reaction 7-aminomethyl-7-carbaguanine + 2 NADP(+) = 7-cyano-7-deazaguanine + 2 NADPH + 3 H(+). Its pathway is tRNA modification; tRNA-queuosine biosynthesis. Functionally, catalyzes the NADPH-dependent reduction of 7-cyano-7-deazaguanine (preQ0) to 7-aminomethyl-7-deazaguanine (preQ1). In Burkholderia cenocepacia (strain HI2424), this protein is NADPH-dependent 7-cyano-7-deazaguanine reductase.